A 267-amino-acid chain; its full sequence is Stomatin-3 (267 aa).

Residues 17 to 37 (FVALICAWAFLLLTFPVSIFF) traverse the membrane as a helical segment.

Belongs to the band 7/mec-2 family.

It is found in the membrane. This is Stomatin-3 (sto-3) from Caenorhabditis elegans.